Reading from the N-terminus, the 775-residue chain is Aconitate hydratase, mitochondrial (775 aa).

A mitochondrion-targeting transit peptide spans 1 to 25 (MLTTLARASAMLLGARGFASAADLD). Residues glutamine 95 and 188-190 (DSH) each bind substrate. Residue asparagine 337 is glycosylated (N-linked (GlcNAc...) asparagine). Cysteine 381 serves as a coordination point for [4Fe-4S] cluster. N-linked (GlcNAc...) asparagine glycosylation is present at asparagine 383. Residues cysteine 444 and cysteine 447 each coordinate [4Fe-4S] cluster. Arginine 470 provides a ligand contact to substrate. The N-linked (GlcNAc...) asparagine glycan is linked to asparagine 471. Substrate contacts are provided by arginine 475 and arginine 603. Asparagine 608 carries N-linked (GlcNAc...) asparagine glycosylation. A substrate-binding site is contributed by 666–667 (SR). Residues asparagine 754 and asparagine 763 are each glycosylated (N-linked (GlcNAc...) asparagine).

The protein belongs to the aconitase/IPM isomerase family. In terms of assembly, monomer. The cofactor is [4Fe-4S] cluster.

The protein localises to the mitochondrion. The enzyme catalyses citrate = D-threo-isocitrate. The protein operates within carbohydrate metabolism; tricarboxylic acid cycle; isocitrate from oxaloacetate: step 2/2. In terms of biological role, catalyzes the isomerization of citrate to isocitrate via cis-aconitate. This is Aconitate hydratase, mitochondrial from Arthroderma benhamiae (strain ATCC MYA-4681 / CBS 112371) (Trichophyton mentagrophytes).